The chain runs to 461 residues: Kynureninase (461 aa).

Pyridoxal 5'-phosphate-binding positions include L114, T115, 142–145, D228, H231, and Y253; that span reads FPSD. N6-(pyridoxal phosphate)lysine is present on K254. Pyridoxal 5'-phosphate contacts are provided by W288 and N316.

Belongs to the kynureninase family. As to quaternary structure, homodimer. Requires pyridoxal 5'-phosphate as cofactor.

It is found in the cytoplasm. It carries out the reaction L-kynurenine + H2O = anthranilate + L-alanine + H(+). The catalysed reaction is 3-hydroxy-L-kynurenine + H2O = 3-hydroxyanthranilate + L-alanine + H(+). Its pathway is amino-acid degradation; L-kynurenine degradation; L-alanine and anthranilate from L-kynurenine: step 1/1. The protein operates within cofactor biosynthesis; NAD(+) biosynthesis; quinolinate from L-kynurenine: step 2/3. Its function is as follows. Catalyzes the cleavage of L-kynurenine (L-Kyn) and L-3-hydroxykynurenine (L-3OHKyn) into anthranilic acid (AA) and 3-hydroxyanthranilic acid (3-OHAA), respectively. The protein is Kynureninase of Candida albicans (strain SC5314 / ATCC MYA-2876) (Yeast).